We begin with the raw amino-acid sequence, 335 residues long: Tryptophan--tRNA ligase (335 aa).

ATP is bound by residues 9–11 (QST) and 17–18 (GN). A 'HIGH' region motif is present at residues 10 to 18 (STNSLTLGN). D137 is an L-tryptophan binding site. ATP is bound by residues 149-151 (GKD), I189, and 198-202 (KMSKS). Positions 198-202 (KMSKS) match the 'KMSKS' region motif.

The protein belongs to the class-I aminoacyl-tRNA synthetase family. In terms of assembly, homodimer.

It localises to the cytoplasm. It carries out the reaction tRNA(Trp) + L-tryptophan + ATP = L-tryptophyl-tRNA(Trp) + AMP + diphosphate + H(+). In terms of biological role, catalyzes the attachment of tryptophan to tRNA(Trp). The protein is Tryptophan--tRNA ligase of Malacoplasma penetrans (strain HF-2) (Mycoplasma penetrans).